A 305-amino-acid polypeptide reads, in one-letter code: MTLRNHQELLVALATLYFLATSLPSVSAHGPYAWDGEATYKFTTYHPGQNYKGLSNVKNYFHHLGYIPNAPHFDDNFDDTLVSAIKTYQKNYNLNVTGKFDINTLKQIMTPRCGVPDIIINTNKTTSFGMISDYTFFKDMPRWQAGTTQLTYAFSPEPRLDDTFKSAIARAFSKWTPVVNIAFQETTSYETANIKILFASKNHGDPYPFDGPGGILGHAFAPTDGRCHFDADEYWVASGDVTKSPVTSAFDLESVAVHEIGHLLGLGHSSDLRAIMYPSIPPRTRKVNLAQDDIDGIRKLYGINP.

An N-terminal signal peptide occupies residues 1-28 (MTLRNHQELLVALATLYFLATSLPSVSA). Positions 29 to 133 (HGPYAWDGEA…KTTSFGMISD (105 aa)) are cleaved as a propeptide — activation peptide. Asn-95 carries N-linked (GlcNAc...) asparagine glycosylation. The Cysteine switch signature appears at 111-118 (PRCGVPDI). Cys-113 lines the Zn(2+) pocket. The N-linked (GlcNAc...) asparagine glycan is linked to Asn-123. Residue His-258 participates in Zn(2+) binding. Glu-259 is an active-site residue. Residues His-262 and His-268 each contribute to the Zn(2+) site.

It belongs to the peptidase M10A family. Matrix metalloproteinases (MMPs) subfamily. Zn(2+) serves as cofactor.

Its function is as follows. Matrix metalloproteinases (MMPs) or matrixins may play a role in the degradation and remodeling of the extracellular matrix (ECM) during development or in response to stresses. The protein is Metalloendoproteinase 1 of Glycine max (Soybean).